The primary structure comprises 464 residues: tRNA modification GTPase MnmE (464 aa).

(6S)-5-formyl-5,6,7,8-tetrahydrofolate contacts are provided by R27, E90, and K129. Residues 222-384 (GVTLVLAGSV…LYDRIRSFIA (163 aa)) form the TrmE-type G domain. Residues 232–237 (NVGKSS), 251–257 (SSYAGTT), and 276–279 (DTAG) each bind GTP. S236 lines the Mg(2+) pocket. A K(+)-binding site is contributed by S251. Residue T257 coordinates Mg(2+). K464 contributes to the (6S)-5-formyl-5,6,7,8-tetrahydrofolate binding site.

It belongs to the TRAFAC class TrmE-Era-EngA-EngB-Septin-like GTPase superfamily. TrmE GTPase family. As to quaternary structure, homodimer. Heterotetramer of two MnmE and two MnmG subunits. K(+) serves as cofactor.

It localises to the cytoplasm. Its function is as follows. Exhibits a very high intrinsic GTPase hydrolysis rate. Involved in the addition of a carboxymethylaminomethyl (cmnm) group at the wobble position (U34) of certain tRNAs, forming tRNA-cmnm(5)s(2)U34. In Borrelia recurrentis (strain A1), this protein is tRNA modification GTPase MnmE.